The primary structure comprises 524 residues: Bifunctional purine biosynthesis protein PurH (524 aa).

The 144-residue stretch at 1–144 folds into the MGS-like domain; sequence MTRRALVSVS…KNSAHVGVVV (144 aa).

The protein belongs to the PurH family.

It catalyses the reaction (6R)-10-formyltetrahydrofolate + 5-amino-1-(5-phospho-beta-D-ribosyl)imidazole-4-carboxamide = 5-formamido-1-(5-phospho-D-ribosyl)imidazole-4-carboxamide + (6S)-5,6,7,8-tetrahydrofolate. The enzyme catalyses IMP + H2O = 5-formamido-1-(5-phospho-D-ribosyl)imidazole-4-carboxamide. It functions in the pathway purine metabolism; IMP biosynthesis via de novo pathway; 5-formamido-1-(5-phospho-D-ribosyl)imidazole-4-carboxamide from 5-amino-1-(5-phospho-D-ribosyl)imidazole-4-carboxamide (10-formyl THF route): step 1/1. It participates in purine metabolism; IMP biosynthesis via de novo pathway; IMP from 5-formamido-1-(5-phospho-D-ribosyl)imidazole-4-carboxamide: step 1/1. The protein is Bifunctional purine biosynthesis protein PurH of Anaeromyxobacter dehalogenans (strain 2CP-C).